Reading from the N-terminus, the 50-residue chain is MTEQEEKVSFGITIPKSLKTRLKIYCAQNDKKIQDVIREALEEYLQRREK.

This is an uncharacterized protein from Sulfolobus islandicus filamentous virus (isolate Iceland/Hveragerdi) (SIFV).